Consider the following 82-residue polypeptide: Small ribosomal subunit protein eS21y (82 aa).

Met-1 bears the N-acetylmethionine mark.

Belongs to the eukaryotic ribosomal protein eS21 family.

This is Small ribosomal subunit protein eS21y (RPS21C) from Arabidopsis thaliana (Mouse-ear cress).